The sequence spans 554 residues: NADH-ubiquinone oxidoreductase chain 5 (554 aa).

Transmembrane regions (helical) follow at residues 6–26 (VCGILLFEFSFLMMLMSLYLL), 57–77 (LMFIFLVSMIFSMIIIYSISY), 93–113 (ILFLISMYMLILSPNMLSIIL), 150–170 (IGLLLIMGLMTYYGSWNLSFY), 175–197 (FMMIYILLMAFTKSAQIPFSTWL), 209–228 (SLVHSSTLVTAGIYLLIRYV), 238–258 (YIMLIASLTMLFAGLVANFEL), 263–283 (VVAYSTLSQLGFMMSMLSIGS), 286–306 (LVFLHLFIHAMFKSLMFMCVG), 332–352 (SMILIFSILSLCGFPFLVGYY), 379–399 (IFTVSYSFRMILVLTSKFLMM), 409–429 (IMCISMMMMMIFSLIYSKLIF), 441–461 (LLMIYKLMVFKMIMVGLIMGF), 480–500 (FLFMNLIYKIIYKKIIMMMFT), and 532–552 (LMINIYLTILIYLIYLLIYLI).

It belongs to the complex I subunit 5 family.

It localises to the mitochondrion inner membrane. It catalyses the reaction a ubiquinone + NADH + 5 H(+)(in) = a ubiquinol + NAD(+) + 4 H(+)(out). Core subunit of the mitochondrial membrane respiratory chain NADH dehydrogenase (Complex I) that is believed to belong to the minimal assembly required for catalysis. Complex I functions in the transfer of electrons from NADH to the respiratory chain. The immediate electron acceptor for the enzyme is believed to be ubiquinone. This Apis mellifera ligustica (Common honeybee) protein is NADH-ubiquinone oxidoreductase chain 5 (ND5).